A 108-amino-acid chain; its full sequence is ATP-dependent Clp protease adapter protein ClpS (108 aa).

Over residues 1–10 (MADSDKHGDE) the composition is skewed to basic and acidic residues. Residues 1–21 (MADSDKHGDEGPSTGVVVKAK) form a disordered region.

Belongs to the ClpS family. As to quaternary structure, binds to the N-terminal domain of the chaperone ClpA.

Functionally, involved in the modulation of the specificity of the ClpAP-mediated ATP-dependent protein degradation. The protein is ATP-dependent Clp protease adapter protein ClpS of Rhodospirillum centenum (strain ATCC 51521 / SW).